Reading from the N-terminus, the 285-residue chain is Phosphatidylserine decarboxylase proenzyme (285 aa).

Active-site charge relay system; for autoendoproteolytic cleavage activity residues include D89, H146, and S252. S252 (schiff-base intermediate with substrate; via pyruvic acid; for decarboxylase activity) is an active-site residue. S252 carries the pyruvic acid (Ser); by autocatalysis modification.

This sequence belongs to the phosphatidylserine decarboxylase family. PSD-B subfamily. Prokaryotic type I sub-subfamily. As to quaternary structure, heterodimer of a large membrane-associated beta subunit and a small pyruvoyl-containing alpha subunit. Pyruvate is required as a cofactor. Post-translationally, is synthesized initially as an inactive proenzyme. Formation of the active enzyme involves a self-maturation process in which the active site pyruvoyl group is generated from an internal serine residue via an autocatalytic post-translational modification. Two non-identical subunits are generated from the proenzyme in this reaction, and the pyruvate is formed at the N-terminus of the alpha chain, which is derived from the carboxyl end of the proenzyme. The autoendoproteolytic cleavage occurs by a canonical serine protease mechanism, in which the side chain hydroxyl group of the serine supplies its oxygen atom to form the C-terminus of the beta chain, while the remainder of the serine residue undergoes an oxidative deamination to produce ammonia and the pyruvoyl prosthetic group on the alpha chain. During this reaction, the Ser that is part of the protease active site of the proenzyme becomes the pyruvoyl prosthetic group, which constitutes an essential element of the active site of the mature decarboxylase.

The protein resides in the cell membrane. It carries out the reaction a 1,2-diacyl-sn-glycero-3-phospho-L-serine + H(+) = a 1,2-diacyl-sn-glycero-3-phosphoethanolamine + CO2. It participates in phospholipid metabolism; phosphatidylethanolamine biosynthesis; phosphatidylethanolamine from CDP-diacylglycerol: step 2/2. Functionally, catalyzes the formation of phosphatidylethanolamine (PtdEtn) from phosphatidylserine (PtdSer). The polypeptide is Phosphatidylserine decarboxylase proenzyme (Vibrio parahaemolyticus serotype O3:K6 (strain RIMD 2210633)).